Consider the following 265-residue polypeptide: GTP cyclohydrolase FolE2 (265 aa).

Belongs to the GTP cyclohydrolase IV family.

It catalyses the reaction GTP + H2O = 7,8-dihydroneopterin 3'-triphosphate + formate + H(+). Its pathway is cofactor biosynthesis; 7,8-dihydroneopterin triphosphate biosynthesis; 7,8-dihydroneopterin triphosphate from GTP: step 1/1. Functionally, converts GTP to 7,8-dihydroneopterin triphosphate. The protein is GTP cyclohydrolase FolE2 of Bordetella avium (strain 197N).